The chain runs to 1534 residues: MVDVNDVIHANEKAQIDFAQMLLPEGIRRDNNKMYEEVEIPPNEPMPIGFEEKAVFVSELDEIGQLVFKGMKRLNRIQSIVFETAYNTNENLLICAPTGAGKTNIAMLTILHEIRQHLQPGGVIRKDQFKIVYVAPMKALAAEMTNYFSKRLEPLGIAVKELTGDMQLTKGEILRTQMLVTTPEKWDVVTRKSVGDVALSQVVRLLILDEVHLLHEDRGPVLESLVARTLRQVESTQSMIRILGLSATLPNYLDVATFLHVNPFIGLFYFDSRFRPVPLGQSFVGIKTTNKVQQLHDMEEVCYEKVLKQIKAGHQVMVFVHARNSTVRTAMSLIEMAKNRGELSFFQVDQGADYGQCEKQIQRSRNKQMREMFPDGFGIHHAGMLRQDRSLMESMFSRGYLKVLVCTATLAWGVNLPAHAVIIKGTNIYDAKRGTLVDLGILDVMQIFGRAGRPQFDKYGEGTIITTHDKLSHYLTLLTQQNPIESQFQQSLADNLNAEIALGTVTNVDEAVRWLSYTYLYVRMRANPLAYGINHKAYQMDPQLELYRKELVVESGRKLDKARMIRFDERTGYFASTDLGRTASHFYIKYNTIESFNELFNAQNTEADVLSIVSKAEEFEQIKVRVQEEDADGKSSVQILCGSHHTNAARIMRALFEMALRKRWPAMTYRLLNLCKVMDKRLWGWAHPLRQFNTLPASALARMEDKNLTIDKLRDMGKDEIGHMLHHVNIGLKVKQCVHQIPAILLESSIQPITRTVLRVRLSITPDFRWNDQVHGSVGEPWWLWVEDPINDHIYHSEYFLLQKKQVVSGEPQQVVFTIPIFEPMPSQYYIRAVSDRWLGSEAVCIINFQHLILPERHPPHTELLDLQPLPITALGNREYESLYKFTHYNPIQTQIFHTLYHTDTNVLLGAPTGSGKTIAAEMAIFRVFNMYPTSKVVYIAPLKALVRERIEDWKIRIEEKLGRKVVELTGDNTPDMRAIAQADLIVTTPEKWDGVSRSWQNRSYVQKVAILIIDEIHLLGEDRGPVLEVIVSRTNFISSHTSKTVRVVGLSTALANARDLADWLGIGQVGLFNFRPSVRPVPLEVHIQGFPGQHYCPRMATMNKPVFQAIRTHSPAKPVLIFVSSRRQTRLTALDLIAFLATEDDPKQWLHQDEREMTDIIATIRESNLKLTLAFGIGMHHAGLHERDRKTVEELFVNCKIQVLIATSTLAWGVNFPAHLVIVKGTEYYDGKTRRYVDYPITDVLQMMGRAGRPQFDDQGKAVILVHDIKKDFYKKFLYEPFPVESSLLSVLSDHLNAEIAAGTVTSKQDAMDYITWTYFFRRLVMNPSYYNLDDISHETINKYLSNLVERSLRDLECSYCMEIQQDEQTIEPLTYGRISSYYYLKHQTIRMFKERLKPELPVHELLAILSLPCSDYGTDTKTVLDNAIRICQAMLDVVANEGWLVSALSLCNLVQMIIQARWLHDSSLLTLPHIQKQELYVFRRWSSRGVRAGCGHQGPIEGLPELIAACDGKEDIFTSMVKEVLQPNQISQ.

One can recognise a Helicase ATP-binding 1 domain in the interval 83–267 (ETAYNTNENL…FLHVNPFIGL (185 aa)). 96 to 103 (APTGAGKT) contributes to the ATP binding site. The short motif at 209 to 212 (DEVH) is the DEVH box element. The 207-residue stretch at 294–500 (QLHDMEEVCY…SLADNLNAEI (207 aa)) folds into the Helicase C-terminal 1 domain. Residues 576 to 849 (STDLGRTASH…GSEAVCIINF (274 aa)) enclose the SEC63 1 domain. Residues 898–1073 (HTLYHTDTNV…WLGIGQVGLF (176 aa)) enclose the Helicase ATP-binding 2 domain. Residue 911 to 918 (APTGSGKT) coordinates ATP. Positions 1015–1018 (DEIH) match the DEIH box motif. The Helicase C-terminal 2 domain maps to 1106-1313 (PVFQAIRTHS…GTVTSKQDAM (208 aa)). Residues 1374-1481 (PLTYGRISSY…TLPHIQKQEL (108 aa)) enclose the SEC63 2 domain.

The protein belongs to the helicase family.

The protein localises to the nucleus. Its subcellular location is the nucleus speckle. The protein resides in the cytoplasm. It localises to the cytosol. It carries out the reaction Couples ATP hydrolysis with the unwinding of duplex DNA by translocating in the 3'-5' direction.. It catalyses the reaction ATP + H2O = ADP + phosphate + H(+). Its function is as follows. 3'-5' DNA helicase involved in repair of alkylated DNA. Promotes DNA unwinding to generate single-stranded substrate needed for alkbh3, enabling alkbh3 to process alkylated N3-methylcytosine (3mC) within double-stranded regions. Also involved in activation of the ribosome quality control (RQC) pathway, a pathway that degrades nascent peptide chains during problematic translation. Drives the splitting of stalled ribosomes. The protein is Activating signal cointegrator 1 complex subunit 3 (ascc3) of Danio rerio (Zebrafish).